Here is a 380-residue protein sequence, read N- to C-terminus: Cytochrome b (380 aa).

4 helical membrane-spanning segments follow: residues 33–53 (FGSLLGLCLIIQILTGLFLAM), 77–98 (WLIRYMHANGASMFFICLFLHV), 113–133 (WNMGIVLLFAVMATAFMGYVL), and 178–198 (FFAFHFILPFIITALVLVHLL). 2 residues coordinate heme b: His83 and His97. Heme b is bound by residues His182 and His196. A ubiquinone is bound at residue His201. A run of 4 helical transmembrane segments spans residues 226-246 (IKDFLGVLILLMAFMILTLFF), 288-308 (LGGVLALILSIVILAFMPLLH), 320-340 (ITQTMYWILVADLLVLTWIGG), and 347-367 (FIIIGQTASIAYFAIIVILMP).

Belongs to the cytochrome b family. As to quaternary structure, the cytochrome bc1 complex contains 11 subunits: 3 respiratory subunits (MT-CYB, CYC1 and UQCRFS1), 2 core proteins (UQCRC1 and UQCRC2) and 6 low-molecular weight proteins (UQCRH/QCR6, UQCRB/QCR7, UQCRQ/QCR8, UQCR10/QCR9, UQCR11/QCR10 and a cleavage product of UQCRFS1). This cytochrome bc1 complex then forms a dimer. Heme b is required as a cofactor.

It is found in the mitochondrion inner membrane. Its function is as follows. Component of the ubiquinol-cytochrome c reductase complex (complex III or cytochrome b-c1 complex) that is part of the mitochondrial respiratory chain. The b-c1 complex mediates electron transfer from ubiquinol to cytochrome c. Contributes to the generation of a proton gradient across the mitochondrial membrane that is then used for ATP synthesis. The sequence is that of Cytochrome b (MT-CYB) from Microtus guentheri (Gunther's vole).